The sequence spans 117 residues: UPF0102 protein Spro_4337 (117 aa).

Belongs to the UPF0102 family.

The sequence is that of UPF0102 protein Spro_4337 from Serratia proteamaculans (strain 568).